Reading from the N-terminus, the 145-residue chain is NADH-quinone oxidoreductase subunit A (145 aa).

A run of 3 helical transmembrane segments spans residues 14-34 (FAVFLLSALGLCVFMLTGGFL), 66-86 (FYLVAMFFVIFDVETLYLYAW), and 96-116 (VGFIEATIFILILLAGLVYLV).

The protein belongs to the complex I subunit 3 family. In terms of assembly, NDH-1 is composed of 13 different subunits. Subunits NuoA, H, J, K, L, M, N constitute the membrane sector of the complex.

It is found in the cell inner membrane. The catalysed reaction is a quinone + NADH + 5 H(+)(in) = a quinol + NAD(+) + 4 H(+)(out). In terms of biological role, NDH-1 shuttles electrons from NADH, via FMN and iron-sulfur (Fe-S) centers, to quinones in the respiratory chain. The immediate electron acceptor for the enzyme in this species is believed to be ubiquinone. Couples the redox reaction to proton translocation (for every two electrons transferred, four hydrogen ions are translocated across the cytoplasmic membrane), and thus conserves the redox energy in a proton gradient. This chain is NADH-quinone oxidoreductase subunit A, found in Sodalis glossinidius (strain morsitans).